The primary structure comprises 187 residues: Elongation factor P (187 aa).

The protein belongs to the elongation factor P family.

The protein resides in the cytoplasm. Its pathway is protein biosynthesis; polypeptide chain elongation. Involved in peptide bond synthesis. Stimulates efficient translation and peptide-bond synthesis on native or reconstituted 70S ribosomes in vitro. Probably functions indirectly by altering the affinity of the ribosome for aminoacyl-tRNA, thus increasing their reactivity as acceptors for peptidyl transferase. The protein is Elongation factor P of Chromobacterium violaceum (strain ATCC 12472 / DSM 30191 / JCM 1249 / CCUG 213 / NBRC 12614 / NCIMB 9131 / NCTC 9757 / MK).